The chain runs to 362 residues: Histidine biosynthesis bifunctional protein HisB (362 aa).

A histidinol-phosphatase region spans residues 1–173 (MQPTLFIDRD…TVTNCGKRPP (173 aa)). Catalysis depends on aspartate 8, which acts as the Nucleophile. Residues aspartate 8 and aspartate 10 each coordinate Mg(2+). Aspartate 10 (proton donor) is an active-site residue. Residues cysteine 91, histidine 93, cysteine 99, and cysteine 101 each coordinate Zn(2+). Aspartate 128 is a Mg(2+) binding site. The tract at residues 174–362 (RFAEVIRQTK…NEMPSSKGVL (189 aa)) is imidazoleglycerol-phosphate dehydratase.

The protein in the N-terminal section; belongs to the histidinol-phosphatase family. In the C-terminal section; belongs to the imidazoleglycerol-phosphate dehydratase family. Requires Mg(2+) as cofactor. The cofactor is Zn(2+).

It is found in the cytoplasm. It catalyses the reaction D-erythro-1-(imidazol-4-yl)glycerol 3-phosphate = 3-(imidazol-4-yl)-2-oxopropyl phosphate + H2O. The catalysed reaction is L-histidinol phosphate + H2O = L-histidinol + phosphate. It functions in the pathway amino-acid biosynthesis; L-histidine biosynthesis; L-histidine from 5-phospho-alpha-D-ribose 1-diphosphate: step 6/9. Its pathway is amino-acid biosynthesis; L-histidine biosynthesis; L-histidine from 5-phospho-alpha-D-ribose 1-diphosphate: step 8/9. The chain is Histidine biosynthesis bifunctional protein HisB from Haemophilus influenzae (strain 86-028NP).